We begin with the raw amino-acid sequence, 213 residues long: Kiwellin (213 aa).

A signal peptide spans 1–24 (MAQLSLLVLSLFLTLISLPPPGAS). Cystine bridges form between Cys28-Cys60, Cys32-Cys44, and Cys38-Cys49. 4-hydroxyproline is present on residues Pro65 and Pro67. 4 disulfides stabilise this stretch: Cys72–Cys90, Cys80–Cys172, Cys119–Cys144, and Cys166–Cys182. Positions 91–121 (SPPVTSSTPAKLTNNDFSEGGDGGGPSECDE) are disordered. A compositionally biased stretch (polar residues) spans 93–107 (PVTSSTPAKLTNNDF).

Belongs to the kiwellin family. Undergoes proteolytic cleavage by actinidin to produce kissper and KiTH. Three forms of KiTH are produced by cleavage at different sites.

It localises to the secreted. Kissper is an anion-selective pore-forming peptide. The sequence is that of Kiwellin from Actinidia chinensis var. chinensis (Chinese soft-hair kiwi).